The following is a 75-amino-acid chain: Putative DNA-directed RNA polymerase subunit omega (75 aa).

The protein belongs to the RNA polymerase subunit omega family.

The protein localises to the plastid. Its subcellular location is the chloroplast. The enzyme catalyses RNA(n) + a ribonucleoside 5'-triphosphate = RNA(n+1) + diphosphate. Its function is as follows. May be involved in RNA polymerase activity. The protein is Putative DNA-directed RNA polymerase subunit omega of Pyropia yezoensis (Susabi-nori).